Here is a 418-residue protein sequence, read N- to C-terminus: UDP-N-acetylglucosamine 1-carboxyvinyltransferase (418 aa).

22–23 contacts phosphoenolpyruvate; that stretch reads KN. Arginine 91 provides a ligand contact to UDP-N-acetyl-alpha-D-glucosamine. Cysteine 115 serves as the catalytic Proton donor. The residue at position 115 (cysteine 115) is a 2-(S-cysteinyl)pyruvic acid O-phosphothioketal. UDP-N-acetyl-alpha-D-glucosamine is bound by residues 120–124, 160–163, aspartate 305, and isoleucine 327; these read RPVDL and KVSV.

The protein belongs to the EPSP synthase family. MurA subfamily.

The protein localises to the cytoplasm. The enzyme catalyses phosphoenolpyruvate + UDP-N-acetyl-alpha-D-glucosamine = UDP-N-acetyl-3-O-(1-carboxyvinyl)-alpha-D-glucosamine + phosphate. It participates in cell wall biogenesis; peptidoglycan biosynthesis. Cell wall formation. Adds enolpyruvyl to UDP-N-acetylglucosamine. This chain is UDP-N-acetylglucosamine 1-carboxyvinyltransferase, found in Baumannia cicadellinicola subsp. Homalodisca coagulata.